Here is a 364-residue protein sequence, read N- to C-terminus: Pyrimidine monooxygenase RutA (364 aa).

FMN contacts are provided by residues 49 to 50 (IK), Asn115, Glu124, 140 to 141 (RY), and Ser190.

The protein belongs to the NtaA/SnaA/DszA monooxygenase family. RutA subfamily.

The catalysed reaction is uracil + FMNH2 + NADH + O2 = (Z)-3-ureidoacrylate + FMN + NAD(+) + H2O + H(+). It carries out the reaction thymine + FMNH2 + NADH + O2 = (Z)-2-methylureidoacrylate + FMN + NAD(+) + H2O + H(+). Its function is as follows. Catalyzes the pyrimidine ring opening between N-3 and C-4 by an unusual flavin hydroperoxide-catalyzed mechanism, adding oxygen atoms in the process to yield ureidoacrylate peracid, that immediately reacts with FMN forming ureidoacrylate and FMN-N(5)-oxide. The FMN-N(5)-oxide reacts spontaneously with NADH to produce FMN. Requires the flavin reductase RutF to regenerate FMN in vivo. The polypeptide is Pyrimidine monooxygenase RutA (Methylorubrum extorquens (strain ATCC 14718 / DSM 1338 / JCM 2805 / NCIMB 9133 / AM1) (Methylobacterium extorquens)).